Here is a 376-residue protein sequence, read N- to C-terminus: Protein-arginine rhamnosyltransferase (376 aa).

Residues 13 to 16, Y192, 252 to 254, and 270 to 274 contribute to the dTDP-beta-L-rhamnose site; these read NYGD, MAQ, and RGEDS. Position 14–15 (14–15) interacts with dTDP; sequence YG. D16 acts as the Proton acceptor in catalysis. Residues Y192, 252–254, and 270–274 each bind dTDP; these read MAQ and RGEDS. E272 is a catalytic residue.

Belongs to the glycosyltransferase 104 family.

It carries out the reaction dTDP-beta-L-rhamnose + L-arginyl-[protein] = N(omega)-(alpha-L-rhamnosyl)-L-arginyl-[protein] + dTDP + H(+). In terms of biological role, protein-arginine rhamnosyltransferase that catalyzes the transfer of a single rhamnose to elongation factor P (EF-P) on 'Lys-32', a modification required for EF-P-dependent rescue of polyproline stalled ribosomes. In Pseudomonas aeruginosa (strain ATCC 15692 / DSM 22644 / CIP 104116 / JCM 14847 / LMG 12228 / 1C / PRS 101 / PAO1), this protein is Protein-arginine rhamnosyltransferase.